Reading from the N-terminus, the 389-residue chain is Aspartate aminotransferase (389 aa).

2 residues coordinate L-aspartate: Gly-34 and Asn-171. Lys-233 is subject to N6-(pyridoxal phosphate)lysine. Arg-362 contributes to the L-aspartate binding site.

It belongs to the class-I pyridoxal-phosphate-dependent aminotransferase family. Homodimer. Pyridoxal 5'-phosphate is required as a cofactor.

It is found in the cytoplasm. The catalysed reaction is L-aspartate + 2-oxoglutarate = oxaloacetate + L-glutamate. The sequence is that of Aspartate aminotransferase (aspC) from Pyrococcus abyssi (strain GE5 / Orsay).